The sequence spans 284 residues: 2-dehydro-3-deoxyphosphooctonate aldolase (284 aa).

Belongs to the KdsA family.

The protein localises to the cytoplasm. The enzyme catalyses D-arabinose 5-phosphate + phosphoenolpyruvate + H2O = 3-deoxy-alpha-D-manno-2-octulosonate-8-phosphate + phosphate. It participates in carbohydrate biosynthesis; 3-deoxy-D-manno-octulosonate biosynthesis; 3-deoxy-D-manno-octulosonate from D-ribulose 5-phosphate: step 2/3. It functions in the pathway bacterial outer membrane biogenesis; lipopolysaccharide biosynthesis. In Actinobacillus succinogenes (strain ATCC 55618 / DSM 22257 / CCUG 43843 / 130Z), this protein is 2-dehydro-3-deoxyphosphooctonate aldolase.